Here is a 144-residue protein sequence, read N- to C-terminus: MKPYLTTSDFEKLGYELKKPDNFGKLLKSATVLINQICSYYDPAFAYHDLEADSQADPDSYLFRQAMAFKKAVALEMLFLEDSGYSSAYDVAQGALNSFTVGHTSMSLNPSAGQNLTVGSTGVVKSAYDLLGRYGLLFSGVASL.

The protein belongs to the Lactobacillus delbrueckii bacteriophages ORF4 protein family.

This is an uncharacterized protein from Lactococcus phage LL-H (Lactococcus delbrueckii bacteriophage LL-H).